Here is a 380-residue protein sequence, read N- to C-terminus: Lipid-A-disaccharide synthase (380 aa).

Belongs to the LpxB family.

The catalysed reaction is a lipid X + a UDP-2-N,3-O-bis[(3R)-3-hydroxyacyl]-alpha-D-glucosamine = a lipid A disaccharide + UDP + H(+). Its pathway is bacterial outer membrane biogenesis; LPS lipid A biosynthesis. Condensation of UDP-2,3-diacylglucosamine and 2,3-diacylglucosamine-1-phosphate to form lipid A disaccharide, a precursor of lipid A, a phosphorylated glycolipid that anchors the lipopolysaccharide to the outer membrane of the cell. The chain is Lipid-A-disaccharide synthase from Vibrio vulnificus (strain CMCP6).